The following is a 425-amino-acid chain: MYLGRVHCSFEVPGLLSGRVGHMSMAVRSVRLACGPRGALLLLLLVLLGVLVVLHKVTQSPLLNQNKILQDHLRGQHERYIQSTRTILLWTEFFGDSRWKLSWDTLGPQELRDELHCPVYQCEISNQNAFLPAVELYDAIVFHAAEMFPLLRPVPSQRSPHQVYVFALMEPPGETKHRLDDEQGFYNLTMTYRIDSDVFWPYGQLLDITADAVVAPSVKPPWRKPPVAFNDSLVWDLWSGKTKTAAWFVSHCETLSKREVLANRLQEFFEVDIYGNCGTLSCTRGDPHCAEMLDTDYFFYLAFENSLCDDYVTEKLFDALERTVIPVVFGGADYSRILPPHSYVDANRFMSVEGLAQYMKLVVADPDLYVSYFWWRSHYRLTYSSPFCDLCARLHDPSFGHKTQFYHDIQSWWFNSCRLQSRIRL.

Over 1 to 37 the chain is Cytoplasmic; sequence MYLGRVHCSFEVPGLLSGRVGHMSMAVRSVRLACGPR. Residues 38-58 form a helical; Signal-anchor for type II membrane protein membrane-spanning segment; it reads GALLLLLLVLLGVLVVLHKVT. Over 59–425 the chain is Lumenal; that stretch reads QSPLLNQNKI…SCRLQSRIRL (367 aa). 2 N-linked (GlcNAc...) asparagine glycosylation sites follow: Asn187 and Asn230.

This sequence belongs to the glycosyltransferase 10 family.

The protein resides in the golgi apparatus. It is found in the golgi stack membrane. Its pathway is protein modification; protein glycosylation. The chain is Alpha-(1,3)-fucosyltransferase C (FucTC) from Drosophila melanogaster (Fruit fly).